Reading from the N-terminus, the 133-residue chain is MNHTVQTFFSPVNSGQPPNYEMLKEEHEVAVLGAPHNPAPPTSTVIHIRSETSVPDHVVWSLFNTLFMNPCCLGFIAFAYSVKSRDRKMVGDVTGAQAYASTAKCLNIWALILGILMTILLIVIPVLIFQAYG.

The Cytoplasmic portion of the chain corresponds to 1–57; it reads MNHTVQTFFSPVNSGQPPNYEMLKEEHEVAVLGAPHNPAPPTSTVIHIRSETSVPDH. Y20 carries the post-translational modification Phosphotyrosine. A Glycyl lysine isopeptide (Lys-Gly) (interchain with G-Cter in ubiquitin) cross-link involves residue K24. An intramembrane region (helical) is located at residues 58–78; it reads VVWSLFNTLFMNPCCLGFIAF. An interaction with SPP1 region spans residues 60–93; sequence WSLFNTLFMNPCCLGFIAFAYSVKSRDRKMVGDV. Residues C71 and C72 are each lipidated (S-palmitoyl cysteine). Residues 79–107 lie on the Cytoplasmic side of the membrane; it reads AYSVKSRDRKMVGDVTGAQAYASTAKCLN. Glycyl lysine isopeptide (Lys-Gly) (interchain with G-Cter in ubiquitin) cross-links involve residues K83, K88, and K104. A lipid anchor (S-palmitoyl cysteine) is attached at C105. Residues 108–128 traverse the membrane as a helical segment; it reads IWALILGILMTILLIVIPVLI. The tract at residues 108-133 is interaction with VAPA; sequence IWALILGILMTILLIVIPVLIFQAYG. Over 129–133 the chain is Extracellular; the sequence is FQAYG.

It belongs to the CD225/Dispanin family. In terms of assembly, interacts with ATP6V0B. Interacts with CD81. Interacts with SPP1; the interaction reduces OPN expression. Interacts with VAPA. Interacts with BRI3 (isoforms 1 and 2); the interaction with isoform 2 is weaker than with isoform 1. Palmitoylation on membrane-proximal cysteines controls clustering in membrane compartments and antiviral activity against influenza virus and hepatitis C virus (HCV). Has no effect on anti-SARS-CoV-2 activity. In terms of processing, not glycosylated. Post-translationally, polyubiquitinated with both 'Lys-48' and 'Lys-63' linkages. Ubiquitination negatively regulates antiviral activity. Lys-24 is the most prevalent ubiquitination site. Phosphorylation at Tyr-20 is required for endosomal and lysosomal location.

The protein resides in the cell membrane. The protein localises to the late endosome membrane. It localises to the early endosome membrane. Its subcellular location is the lysosome membrane. It is found in the cytoplasm. The protein resides in the perinuclear region. Its function is as follows. IFN-induced antiviral protein which disrupts intracellular cholesterol homeostasis. Inhibits the entry of viruses to the host cell cytoplasm by preventing viral fusion with cholesterol depleted endosomes. May inactivate new enveloped viruses which buds out of the infected cell, by letting them go out with a cholesterol depleted membrane. Active against multiple viruses, including influenza A virus, SARS coronaviruses (SARS-CoV and SARS-CoV-2), Marburg virus (MARV), Ebola virus (EBOV), Dengue virus (DNV), West Nile virus (WNV), human immunodeficiency virus type 1 (HIV-1), hepatitis C virus (HCV) and vesicular stomatitis virus (VSV). Can inhibit: influenza virus hemagglutinin protein-mediated viral entry, MARV and EBOV GP1,2-mediated viral entry, SARS-CoV and SARS-CoV-2 S protein-mediated viral entry and VSV G protein-mediated viral entry. Plays a critical role in the structural stability and function of vacuolar ATPase (v-ATPase). Establishes physical contact with the v-ATPase of endosomes which is critical for proper clathrin localization and is also required for the function of the v-ATPase to lower the pH in phagocytic endosomes thus establishing an antiviral state. In hepatocytes, IFITM proteins act in a coordinated manner to restrict HCV infection by targeting the endocytosed HCV virion for lysosomal degradation. IFITM2 and IFITM3 display anti-HCV activity that may complement the anti-HCV activity of IFITM1 by inhibiting the late stages of HCV entry, possibly in a coordinated manner by trapping the virion in the endosomal pathway and targeting it for degradation at the lysosome. Exerts opposing activities on SARS-CoV-2, including amphipathicity-dependent restriction of virus at endosomes and amphipathicity-independent enhancement of infection at the plasma membrane. The polypeptide is Interferon-induced transmembrane protein 3 (Homo sapiens (Human)).